Consider the following 66-residue polypeptide: Large ribosomal subunit protein bL35 (66 aa).

2 stretches are compositionally biased toward basic residues: residues 1–16 (MPKF…RFKK) and 23–45 (KRGH…RQLR). The disordered stretch occupies residues 1–66 (MPKFKTHRAS…RIRQMLSQMK (66 aa)).

This sequence belongs to the bacterial ribosomal protein bL35 family.

The chain is Large ribosomal subunit protein bL35 from Lacticaseibacillus casei (strain BL23) (Lactobacillus casei).